The following is a 573-amino-acid chain: Isocitrate dehydrogenase kinase/phosphatase (573 aa).

ATP is bound by residues 317-323 and lysine 338; that span reads APGVRGM. Residue aspartate 373 is part of the active site.

Belongs to the AceK family.

Its subcellular location is the cytoplasm. It catalyses the reaction L-seryl-[isocitrate dehydrogenase] + ATP = O-phospho-L-seryl-[isocitrate dehydrogenase] + ADP + H(+). Functionally, bifunctional enzyme which can phosphorylate or dephosphorylate isocitrate dehydrogenase (IDH) on a specific serine residue. This is a regulatory mechanism which enables bacteria to bypass the Krebs cycle via the glyoxylate shunt in response to the source of carbon. When bacteria are grown on glucose, IDH is fully active and unphosphorylated, but when grown on acetate or ethanol, the activity of IDH declines drastically concomitant with its phosphorylation. This chain is Isocitrate dehydrogenase kinase/phosphatase, found in Pseudomonas fluorescens (strain ATCC BAA-477 / NRRL B-23932 / Pf-5).